Consider the following 212-residue polypeptide: Peroxiredoxin-like 2A (212 aa).

Residues 3–101 (MWSLGLGAVG…DELGVPLYAV (99 aa)) are thioredoxin fold. Residue U74 is a non-standard amino acid, selenocysteine. C77 acts as the Redox-active in catalysis.

This sequence belongs to the peroxiredoxin-like PRXL2 family. PRXL2A subfamily. As to expression, expressed in kidney marrow.

It is found in the cytoplasm. Functionally, involved in redox regulation of the cell. Acts as an antioxidant. The protein is Peroxiredoxin-like 2A (prxl2a) of Danio rerio (Zebrafish).